The following is a 182-amino-acid chain: uncharacterized protein (182 aa).

The N-terminal stretch at 1–26 (MIRALCTIVLIAAGVAVALYLSLVYG) is a signal peptide. Positions 68 to 90 (YTERPYPVSSTQSPTTTQSPTTT) are disordered. Residues 74–90 (PVSSTQSPTTTQSPTTT) show a composition bias toward low complexity.

This is an uncharacterized protein from Dryophytes versicolor (chameleon treefrog).